A 91-amino-acid polypeptide reads, in one-letter code: MKEKQTTTISLTYRKVKVYFVNTMNIESWCTVELNSKQDWTRADRKHDPNGFNSSVFKGASNQHQESSLDFATAEPEFHRERRHFPEKSEY.

Residues Arg42–Tyr91 form a disordered region. Residues Gly51–Asp70 show a composition bias toward polar residues. The segment covering Pro76–Tyr91 has biased composition (basic and acidic residues).

This sequence belongs to the SPATA45 family.

The chain is Protein SPATA45 homolog from Nematostella vectensis (Starlet sea anemone).